Reading from the N-terminus, the 240-residue chain is MGMTPRRKRRGGAVQITRPTGRPRTPTTQTTKRPRWVVGGTTILTFVALLYLVELIDQLSGSRLDVNGIRPLKTDGLWGVIFAPLLHANWHHLMANTIPLLVLGFLMTLAGLSRFVWATAIIWILGGLGTWLIGNVGSSCGPTDHIGASGLIFGWLAFLLVFGLFVRKGWDIVIGLVVLFVYGGILLGAMPVLGQCGGVSWQGHLSGAVAGVVAAYLLSAPERKARALKRAGARSGHPKL.

Residues 1 to 11 (MGMTPRRKRRG) are compositionally biased toward basic residues. A disordered region spans residues 1–32 (MGMTPRRKRRGGAVQITRPTGRPRTPTTQTTK). Over residues 17–31 (TRPTGRPRTPTTQTT) the composition is skewed to low complexity. A run of 6 helical transmembrane segments spans residues 36–56 (WVVG…VELI), 93–113 (LMAN…AGLS), 115–135 (FVWA…LIGN), 146–166 (IGAS…GLFV), 172–192 (IVIG…AMPV), and 198–218 (GVSW…AYLL).

This sequence to M.leprae ML1171.

Its subcellular location is the cell membrane. This is an uncharacterized protein from Mycobacterium tuberculosis (strain CDC 1551 / Oshkosh).